Consider the following 488-residue polypeptide: Ribulose bisphosphate carboxylase large chain 1 (488 aa).

Substrate contacts are provided by Asn-128 and Thr-178. Lys-180 functions as the Proton acceptor in the catalytic mechanism. Lys-182 is a binding site for substrate. Residues Lys-206, Asp-208, and Glu-209 each contribute to the Mg(2+) site. Lys-206 is subject to N6-carboxylysine. Catalysis depends on His-298, which acts as the Proton acceptor. Substrate contacts are provided by Arg-299, His-331, and Ser-383.

Belongs to the RuBisCO large chain family. Type I subfamily. Heterohexadecamer of 8 large chains and 8 small chains. Mg(2+) serves as cofactor.

It carries out the reaction 2 (2R)-3-phosphoglycerate + 2 H(+) = D-ribulose 1,5-bisphosphate + CO2 + H2O. The catalysed reaction is D-ribulose 1,5-bisphosphate + O2 = 2-phosphoglycolate + (2R)-3-phosphoglycerate + 2 H(+). RuBisCO catalyzes two reactions: the carboxylation of D-ribulose 1,5-bisphosphate, the primary event in carbon dioxide fixation, as well as the oxidative fragmentation of the pentose substrate. Both reactions occur simultaneously and in competition at the same active site. This Nitrobacter hamburgensis (strain DSM 10229 / NCIMB 13809 / X14) protein is Ribulose bisphosphate carboxylase large chain 1.